The sequence spans 437 residues: ATP-dependent RNA helicase RhlB (437 aa).

The short motif at 9-37 (QKFADLGLEPTVLEGLDAQGFHYCTPIQA) is the Q motif element. The Helicase ATP-binding domain occupies 40 to 219 (LPVVLTGQDI…FEHMNSPESV (180 aa)). 53-60 (AQTGTGKT) contacts ATP. A DEAD box motif is present at residues 165-168 (DEAD). Residues 245–390 (RLLQTLIEEE…LSKYNSEALL (146 aa)) enclose the Helicase C-terminal domain. The interval 395-437 (APLRLQRTPRQGGNRRPNGNRQGQGQSRPRNNNRRHPQSQKQQ) is disordered. Residues 400-424 (QRTPRQGGNRRPNGNRQGQGQSRPR) are compositionally biased toward low complexity. Residues 425–437 (NNNRRHPQSQKQQ) are compositionally biased toward basic residues.

The protein belongs to the DEAD box helicase family. RhlB subfamily. In terms of assembly, component of the RNA degradosome, which is a multiprotein complex involved in RNA processing and mRNA degradation.

The protein resides in the cytoplasm. It carries out the reaction ATP + H2O = ADP + phosphate + H(+). In terms of biological role, DEAD-box RNA helicase involved in RNA degradation. Has RNA-dependent ATPase activity and unwinds double-stranded RNA. The polypeptide is ATP-dependent RNA helicase RhlB (Photobacterium profundum (strain SS9)).